The chain runs to 323 residues: E3 ubiquitin-protein ligase SIRP1 (323 aa).

The RING-type; atypical zinc-finger motif lies at 199 to 240 (CSVCLDDLEVGSQAKQMPCEHKFHSSCILPWLELHSSCPVCR). 2 disordered regions span residues 248–280 (TKDL…ESSN) and 296–323 (REAQ…AGHS). Basic and acidic residues predominate over residues 259 to 269 (RVEDSHEEVRA).

Its subcellular location is the cytoplasm. It catalyses the reaction S-ubiquitinyl-[E2 ubiquitin-conjugating enzyme]-L-cysteine + [acceptor protein]-L-lysine = [E2 ubiquitin-conjugating enzyme]-L-cysteine + N(6)-ubiquitinyl-[acceptor protein]-L-lysine.. Its pathway is protein modification; protein ubiquitination. Its function is as follows. Possesses E3 ubiqutin-protein ligase activity in vitro. Acts as negative regulator of salinity stress tolerance mediated by the ubiquitin-proteasome degradation pathway. The chain is E3 ubiquitin-protein ligase SIRP1 from Oryza sativa subsp. japonica (Rice).